A 202-amino-acid polypeptide reads, in one-letter code: Ribonuclease HII (202 aa).

The region spanning 13-202 (KIEAGLDEAG…HFKPKQLDLF (190 aa)) is the RNase H type-2 domain. A divalent metal cation is bound by residues aspartate 19, glutamate 20, and aspartate 112.

The protein belongs to the RNase HII family. It depends on Mn(2+) as a cofactor. Mg(2+) is required as a cofactor.

It is found in the cytoplasm. It carries out the reaction Endonucleolytic cleavage to 5'-phosphomonoester.. Endonuclease that specifically degrades the RNA of RNA-DNA hybrids. The sequence is that of Ribonuclease HII from Cytophaga hutchinsonii (strain ATCC 33406 / DSM 1761 / CIP 103989 / NBRC 15051 / NCIMB 9469 / D465).